The sequence spans 209 residues: Methylated-DNA--protein-cysteine methyltransferase (209 aa).

C5 serves as a coordination point for Zn(2+). S14 bears the Phosphoserine mark. The Zn(2+) site is built by C24 and H29. Residues 35 to 57 (SGKTPSSDPKEAPASPELLGGPE) are disordered. H89 serves as a coordination point for Zn(2+). DNA contacts are provided by T99, Y118, Q119, N127, and R132. Catalysis depends on C149, which acts as the Nucleophile; methyl group acceptor. S155 is a binding site for DNA. Position 205 is a phosphoserine (S205).

The protein belongs to the MGMT family. It depends on Zn(2+) as a cofactor.

It is found in the nucleus. It catalyses the reaction a 6-O-methyl-2'-deoxyguanosine in DNA + L-cysteinyl-[protein] = S-methyl-L-cysteinyl-[protein] + a 2'-deoxyguanosine in DNA. The catalysed reaction is a 4-O-methyl-thymidine in DNA + L-cysteinyl-[protein] = a thymidine in DNA + S-methyl-L-cysteinyl-[protein]. Involved in the cellular defense against the biological effects of O6-methylguanine (O6-MeG) and O4-methylthymine (O4-MeT) in DNA. Repairs the methylated nucleobase in DNA by stoichiometrically transferring the methyl group to a cysteine residue in the enzyme. This is a suicide reaction: the enzyme is irreversibly inactivated. This is Methylated-DNA--protein-cysteine methyltransferase (MGMT) from Cricetulus griseus (Chinese hamster).